A 342-amino-acid polypeptide reads, in one-letter code: MFNISPANHEFDDEIQSKIDNKTKPLGALGELENLAKQLALVLGKDKPEIINPKLLVFAADHGIASSGVSIAPSEVTTQMVMNFVAGGAAINVFCRQVGLDMEVIDCGILQPLEGVEGVIDQRLGAGTGAIHKQAAMTLGAVKQGLEMARTRIELHHQQGCNLIALGEMGIGNTSSAAAIMATVMGMKGVDCVGRGTGIDAATLKRKQMLVEQALHIHEAELTDPYNILACLGGFEIVQMTGAMLAAAERNMLVIVDGFIATAAAMVAVQINANVRDYMIFGHQSDERGHCLMMEHLQARPLLRLGMRLGEGSGAVLALPLIRAAAGFYNEMASFSDAGIEI.

The active-site Proton acceptor is the glutamate 311.

The protein belongs to the CobT family.

The enzyme catalyses 5,6-dimethylbenzimidazole + nicotinate beta-D-ribonucleotide = alpha-ribazole 5'-phosphate + nicotinate + H(+). It functions in the pathway nucleoside biosynthesis; alpha-ribazole biosynthesis; alpha-ribazole from 5,6-dimethylbenzimidazole: step 1/2. Its function is as follows. Catalyzes the synthesis of alpha-ribazole-5'-phosphate from nicotinate mononucleotide (NAMN) and 5,6-dimethylbenzimidazole (DMB). This Shewanella sediminis (strain HAW-EB3) protein is Nicotinate-nucleotide--dimethylbenzimidazole phosphoribosyltransferase.